The chain runs to 401 residues: Thermophilic serine proteinase (401 aa).

Residues 1–24 (MKFKAIVSLSLAVSMSLFPFLVEA) form the signal peptide. A propeptide spanning residues 25–121 (ASNDGVESPK…AEPNYLFNAA (97 aa)) is cleaved from the precursor. D126 lines the Ca(2+) pocket. One can recognise a Peptidase S8 domain in the interval 133 to 399 (QYGPQNTYTD…YGRINSYNAV (267 aa)). The Charge relay system role is filled by D160. Residues P168, D169, D171, D179, D184, and D186 each contribute to the Ca(2+) site. H193 serves as the catalytic Charge relay system. The Ca(2+) site is built by E204, N207, T209, and I211. Residues C258 and C260 are joined by a disulfide bond. Na(+)-binding residues include Y297, V300, and D323. S347 functions as the Charge relay system in the catalytic mechanism.

Belongs to the peptidase S8 family. Ca(2+) is required as a cofactor. The cofactor is Na(+).

The protein localises to the secreted. This Bacillus sp. (strain AK1) protein is Thermophilic serine proteinase.